Consider the following 921-residue polypeptide: Isoleucine--tRNA ligase (921 aa).

A 'HIGH' region motif is present at residues 57 to 67 (PYANGDIHMGH). An L-isoleucyl-5'-AMP-binding site is contributed by glutamate 552. A 'KMSKS' region motif is present at residues 593–597 (KMSKS). Lysine 596 serves as a coordination point for ATP. The Zn(2+) site is built by cysteine 887, cysteine 890, cysteine 907, and cysteine 910.

It belongs to the class-I aminoacyl-tRNA synthetase family. IleS type 1 subfamily. As to quaternary structure, monomer. Zn(2+) is required as a cofactor.

It is found in the cytoplasm. It catalyses the reaction tRNA(Ile) + L-isoleucine + ATP = L-isoleucyl-tRNA(Ile) + AMP + diphosphate. Functionally, catalyzes the attachment of isoleucine to tRNA(Ile). As IleRS can inadvertently accommodate and process structurally similar amino acids such as valine, to avoid such errors it has two additional distinct tRNA(Ile)-dependent editing activities. One activity is designated as 'pretransfer' editing and involves the hydrolysis of activated Val-AMP. The other activity is designated 'posttransfer' editing and involves deacylation of mischarged Val-tRNA(Ile). The protein is Isoleucine--tRNA ligase of Halalkalibacterium halodurans (strain ATCC BAA-125 / DSM 18197 / FERM 7344 / JCM 9153 / C-125) (Bacillus halodurans).